Here is a 22-residue protein sequence, read N- to C-terminus: Thylakoid lumenal 11 kDa protein (22 aa).

A disordered region spans residues 1–22 (FKGGGPYGQGVTRGQDLSGKDF).

It to A.thaliana At2g44920.

The protein localises to the plastid. It is found in the chloroplast thylakoid lumen. This is Thylakoid lumenal 11 kDa protein from Spinacia oleracea (Spinach).